The chain runs to 78 residues: Probable [Fe-S]-dependent transcriptional repressor (78 aa).

4 residues coordinate iron-sulfur cluster: Cys56, Cys61, Cys64, and Cys70.

It belongs to the FeoC family.

Functionally, may function as a transcriptional regulator that controls feoABC expression. The sequence is that of Probable [Fe-S]-dependent transcriptional repressor from Escherichia coli O127:H6 (strain E2348/69 / EPEC).